Consider the following 420-residue polypeptide: Melatonin receptor type 1C (420 aa).

Residues 1–34 (MMEVNSTCLDCRTPGTIRTEQDAQDSASQGLTSA) are Extracellular-facing. Asparagine 5 is a glycosylation site (N-linked (GlcNAc...) asparagine). A helical transmembrane segment spans residues 35–55 (LAVVLIFTIVVDVLGNILVIL). Residues 56-73 (SVLRNKKLQNAGNLFVVS) are Cytoplasmic-facing. A helical membrane pass occupies residues 74 to 94 (LSIADLVVAVYPYPVILIAIF). Residues 95 to 106 (QNGWTLGNIHCQ) lie on the Extracellular side of the membrane. The cysteines at positions 105 and 182 are disulfide-linked. Residues 107-127 (ISGFLMGLSVIGSVFNITAIA) form a helical membrane-spanning segment. The Cytoplasmic portion of the chain corresponds to 128-152 (INRYCYICHSLRYDKLYNQRSTWCY). The helical transmembrane segment at 153 to 173 (LGLTWILTIIAIVPNFFVGSL) threads the bilayer. The Extracellular portion of the chain corresponds to 174–192 (QYDPRIFSCTFAQTVSSSY). A helical transmembrane segment spans residues 193 to 213 (TITVVVVHFIVPLSVVTFCYL). Residues 214-245 (RIWVLVIQVKHRVRQDFKQKLTQTDLRNFLTM) lie on the Cytoplasmic side of the membrane. The helical transmembrane segment at 246–266 (FVVFVLFAVCWAPLNFIGLAV) threads the bilayer. The Extracellular portion of the chain corresponds to 267–279 (AINPFHVAPKIPE). The helical transmembrane segment at 280–303 (WLFVLSYFMAYFNSCLNAVIYGVL) threads the bilayer. Over 304-420 (NQNFRKEYKR…ELCKDGISQR (117 aa)) the chain is Cytoplasmic.

Belongs to the G-protein coupled receptor 1 family. Moderately expressed in dermal melanophores.

It is found in the cell membrane. In terms of biological role, high affinity receptor for melatonin. Likely to mediate the potent effects of melatonin on pigment aggregation in melanophores. The activity of this receptor is mediated by pertussis toxin sensitive G proteins that inhibit adenylate cyclase activity. This is Melatonin receptor type 1C (mtnr1c) from Xenopus laevis (African clawed frog).